A 149-amino-acid polypeptide reads, in one-letter code: 17 kDa major membrane protein (149 aa).

The signal sequence occupies residues 1 to 19 (MKKIIKLSLLSLSIAGLAS). A lipid anchor (N-palmitoyl cysteine) is attached at Cys20. The S-diacylglycerol cysteine moiety is linked to residue Cys20.

It localises to the cell outer membrane. This is 17 kDa major membrane protein from Francisella tularensis subsp. holarctica (strain LVS).